The following is a 273-amino-acid chain: MEASMPKRKEPGKSLRIKVISMGNAEVGKSCIIKRYCEKRFVSKYLATIGIDYGVTKVQVRDREIKVNIFDMAGDPFFYEVRNEFYKDTQGVILVYDVGQKDSFDALDTWLAEMKQDLGPHGNMENIVFAVCANKIDCTKHRCVDESEGRLWAESKGFLYFETSAQTGEGINEMFQTFYLSIVDLCENGGKRPNTNSSASFTKEQADTIRRIRSSKDSWDMLGVKPGASRDEVNKAYRKLAVLLHPDKCVAPGSEDAFKAVVNARTALLKNIK.

The interval 1–18 (MEASMPKRKEPGKSLRIK) is required for interaction with MAPK1. Residues 23–30 (GNAEVGKS), 71–75 (DMAGD), and 134–137 (NKID) contribute to the GTP site. The J domain occupies 217 to 273 (DSWDMLGVKPGASRDEVNKAYRKLAVLLHPDKCVAPGSEDAFKAVVNARTALLKNIK).

Belongs to the small GTPase superfamily. Rab family. As to quaternary structure, interacts directly with MAPK1 (wild-type and kinase-deficient forms). Interacts directly (in GTP-bound form) with MAP2K1 (wild-type and kinase-deficient forms).

Its subcellular location is the nucleus. In terms of biological role, GTPase which can activate the MEK/ERK pathway and induce cell transformation when overexpressed. May act as a nuclear scaffold for MAPK1, probably by association with MAPK1 nuclear export signal leading to enhanced ERK1/ERK2 signaling. The polypeptide is DnaJ homolog subfamily C member 27 (DNAJC27) (Bos taurus (Bovine)).